An 84-amino-acid polypeptide reads, in one-letter code: FMRFamide-like neuropeptides 26 (84 aa).

The N-terminal stretch at Met-1 to Ala-19 is a signal peptide. The propeptide occupies Phe-20 to Tyr-48. 2 positions are modified to phenylalanine amide: Phe-61 and Phe-82.

This sequence belongs to the FARP (FMRFamide related peptide) family. In terms of tissue distribution, each flp gene is expressed in a distinct set of neurons.

The protein resides in the secreted. FMRFamides and FMRFamide-like peptides are neuropeptides. The sequence is that of FMRFamide-like neuropeptides 26 from Caenorhabditis elegans.